The sequence spans 488 residues: MPPYLYRLPTTSLITFSAILNDPSSSYTTILSDATASRTKLHLALKGIADNEPGASALAVLDAVQIYLPYLKGIIACLDADELLFKGEPTFQWRAPLTHFSFSSPLLPLASIHSEHLMVVLTYALALSNYAHSILASLPAFEIPAGPKAMPHMSSEDEKRTTAGLARAVDLLCQASGVAEWAAENVCLQVEPLKGVSSGRLGKGKWPAESSRETFKALSMILLADAHLTAIRKLLFPVLTYTLFAPPGPPLPPNHPSAPLQAKLYLYVHQLYSSARALLSVHQQPTSSAPSNSSRKLFRSNTDKDVIEPEAVEGEIIPELKRYLAKEAQLALALAHKWLGIDAGENGKGAKVGEALAWVKDAQGRLEDLEDSKMRAKLKGLSIGKSRERKKEERRARMGRVERELEVVKAWVKAYQKMNDTVAFQPVPPVSSLVTPSGRPIFGPKAFIPPPSKFSPSRIGHLNEEQGNDSPELGETEDTSYAGKGNYF.

The 429-residue stretch at 2-430 (PPYLYRLPTT…TVAFQPVPPV (429 aa)) folds into the BRO1 domain. The tract at residues 449 to 488 (PPPSKFSPSRIGHLNEEQGNDSPELGETEDTSYAGKGNYF) is disordered.

The protein belongs to the palC family.

Required for the proteolytic cleavage of the transcription factor RIM101 in response to alkaline ambient pH. The chain is pH-response regulator protein palC from Cryptococcus neoformans var. neoformans serotype D (strain B-3501A) (Filobasidiella neoformans).